The sequence spans 584 residues: MISKIKKDLENKISKTIKELALKQNITLDKINIIMKKPPKSELGDLSILIFEFSKILKLSTSVIIEEIIKQIGKKYTTKSMGAYLNIKFNRKEYIKDIIKKVNEQKEKYGINNVLKNKRIIIEFSSPNTNKPLHVGHLRNDIIGESLSRILKASGGQVTKINLINDRGTHICKTMLAYKKFGNNTTPELSLKKGDHLIGDFYVKYNEYAKNNKMAEDEIQQLLCKWEEGDEETVKLWKKLNKWAIEGIKETYKLTNITFDKIYLESEIFKIGREIILQGLEKGLCYKREDGAICINIPIETNEMTDQKFKQKVLLRANGTSIYLTQDLGNILTRKNEFDFDEMIYVVGSEQIHHFKTLFYVADKLGITKENNLVHLSYGMVNLPTGKMKSREGHVIDADNLIHDLSESTMIEIKKRHSNEQDSKKIALNISLGAIHYYLLKTAIHKDILFNKEESLSFTGNSGPYIQYVGARINSILDKYDELNLPSKNINFDLLINENEWAIIKIISEFEEYIIKAAKDRNPSIIVNYSYLLAKSFSAYYQDTKIIDKDNPELTHARTDLSKAVLQTIKNCMHLLNIPYMKKM.

Residues 127–137 carry the 'HIGH' region motif; it reads PNTNKPLHVGH.

Belongs to the class-I aminoacyl-tRNA synthetase family. As to quaternary structure, monomer.

It is found in the cytoplasm. The enzyme catalyses tRNA(Arg) + L-arginine + ATP = L-arginyl-tRNA(Arg) + AMP + diphosphate. The sequence is that of Arginine--tRNA ligase from Borrelia turicatae (strain 91E135).